Consider the following 226-residue polypeptide: Putative N-acetylmannosamine-6-phosphate 2-epimerase (226 aa).

Belongs to the NanE family.

It carries out the reaction an N-acyl-D-glucosamine 6-phosphate = an N-acyl-D-mannosamine 6-phosphate. The protein operates within amino-sugar metabolism; N-acetylneuraminate degradation; D-fructose 6-phosphate from N-acetylneuraminate: step 3/5. Its function is as follows. Converts N-acetylmannosamine-6-phosphate (ManNAc-6-P) to N-acetylglucosamine-6-phosphate (GlcNAc-6-P). The polypeptide is Putative N-acetylmannosamine-6-phosphate 2-epimerase (Mycoplasma mycoides subsp. mycoides SC (strain CCUG 32753 / NCTC 10114 / PG1)).